A 218-amino-acid polypeptide reads, in one-letter code: Probable nicotinate-nucleotide adenylyltransferase (218 aa).

It belongs to the NadD family.

The enzyme catalyses nicotinate beta-D-ribonucleotide + ATP + H(+) = deamido-NAD(+) + diphosphate. The protein operates within cofactor biosynthesis; NAD(+) biosynthesis; deamido-NAD(+) from nicotinate D-ribonucleotide: step 1/1. Functionally, catalyzes the reversible adenylation of nicotinate mononucleotide (NaMN) to nicotinic acid adenine dinucleotide (NaAD). This Halorhodospira halophila (strain DSM 244 / SL1) (Ectothiorhodospira halophila (strain DSM 244 / SL1)) protein is Probable nicotinate-nucleotide adenylyltransferase.